A 501-amino-acid polypeptide reads, in one-letter code: Lysine--tRNA ligase (501 aa).

Residues E404 and E411 each contribute to the Mg(2+) site.

It belongs to the class-II aminoacyl-tRNA synthetase family. Homodimer. Mg(2+) serves as cofactor.

The protein resides in the cytoplasm. The enzyme catalyses tRNA(Lys) + L-lysine + ATP = L-lysyl-tRNA(Lys) + AMP + diphosphate. The protein is Lysine--tRNA ligase of Campylobacter jejuni (strain RM1221).